A 411-amino-acid polypeptide reads, in one-letter code: Endo-1,4-beta-xylanase A (411 aa).

An N-terminal signal peptide occupies residues 1-33 (MKKFKIRKLMARVLALALVFSTFFMVSKVDANA). Residues 34-382 (ASYNLMETYG…KPAYDEVVKA (349 aa)) form the GH10 domain. Glutamate 201 (proton donor) is an active-site residue. Residue glutamate 311 is the Nucleophile of the active site. Positions 387 to 411 (FGNPGSFTPQPTITPQPTPTPSGQT) are disordered. Residues 398–411 (TITPQPTPTPSGQT) are compositionally biased toward pro residues.

The protein belongs to the glycosyl hydrolase 10 (cellulase F) family.

It carries out the reaction Endohydrolysis of (1-&gt;4)-beta-D-xylosidic linkages in xylans.. The protein operates within glycan degradation; xylan degradation. B.fibrisolvens is located in the rumen of ruminant animals, where it contributes to the animal's digestion of plant material by hydrolyzing hemicellulose with its xylanases. The sequence is that of Endo-1,4-beta-xylanase A (xynA) from Butyrivibrio fibrisolvens.